A 338-amino-acid polypeptide reads, in one-letter code: MSQEFNVVVLGASGAVGQTIIEILQERNFPIAKLFPLASSRSAGGTVSFNGKQVEILDVDDFDWSQAQIGFFSAGGDVSEKWAPIAAESGCVVIDNTSHFRYDNDVPLVIPEVNPEAIADFRNRNIIANPNCSTIQMLVALKPIYDAFGISRINVATYQSVSGSGKEAIAELAGQCSKLLQGLPIEPKVYSKQIAFNVLPQIDTFMENGYTKEEMKMVWETQKIFGDDNIVVNPTAVRVPVFFGHSEAIHLETIQPAEAEDVKAVLRDAPGIELFESNEEYPTAVTESAGTDPVYVGRVRKDISHSHGINLWVVSDNIRKGAALNSVQIAEVLIRDYY.

Residues 13-16 and 41-42 each bind NADP(+); these read SGAV and RS. Arg101 is a phosphate binding site. Cys132 serves as the catalytic Acyl-thioester intermediate. Gln159 lines the substrate pocket. NADP(+) is bound by residues 162-163 and Pro187; that span reads SG. Residue Lys216 coordinates phosphate. Arg238 lines the substrate pocket. The active-site Proton acceptor is His245. Asn317 provides a ligand contact to NADP(+).

It belongs to the aspartate-semialdehyde dehydrogenase family. Homodimer.

It catalyses the reaction L-aspartate 4-semialdehyde + phosphate + NADP(+) = 4-phospho-L-aspartate + NADPH + H(+). Its pathway is amino-acid biosynthesis; L-lysine biosynthesis via DAP pathway; (S)-tetrahydrodipicolinate from L-aspartate: step 2/4. The protein operates within amino-acid biosynthesis; L-methionine biosynthesis via de novo pathway; L-homoserine from L-aspartate: step 2/3. It functions in the pathway amino-acid biosynthesis; L-threonine biosynthesis; L-threonine from L-aspartate: step 2/5. Functionally, catalyzes the NADPH-dependent formation of L-aspartate-semialdehyde (L-ASA) by the reductive dephosphorylation of L-aspartyl-4-phosphate. This chain is Aspartate-semialdehyde dehydrogenase, found in Shewanella sp. (strain DB6705).